We begin with the raw amino-acid sequence, 118 residues long: Vesicle-associated membrane protein 1 (118 aa).

The interval 1–36 (MSAPAQPPAEGTEGTAPGGGPPGPPPNMTSNRRLQQ) is disordered. The Cytoplasmic portion of the chain corresponds to 1–96 (MSAPAQPPAE…KRKYWWKNCK (96 aa)). A v-SNARE coiled-coil homology domain is found at 33 to 93 (RLQQTQAQVE…AKLKRKYWWK (61 aa)). Serine 63 is modified (phosphoserine). Residues 97-116 (MMIMLGAICAIIVVVIVIYF) traverse the membrane as a helical; Anchor for type IV membrane protein segment. At 117-118 (FT) the chain is on the vesicular side.

Belongs to the synaptobrevin family. As to quaternary structure, interacts with VAPA and VAPB. (Microbial infection) Targeted and hydrolyzed by C.botulinum neurotoxin type B (BoNT/B, botB) which probably hydrolyzes the 78-Gln-|-Phe-79 bond and inhibits neurotransmitter release. In terms of processing, (Microbial infection) Targeted and hydrolyzed by C.botulinum neurotoxin type D (BoNT/D, botD) which probably hydrolyzes the 61-Arg-|-Leu-62 bond and inhibits neurotransmitter release. BoNT/D has low catalytic activity on this protein due to its sequence. Note that humans are not known to be infected by C.botulinum type D. Post-translationally, (Microbial infection) Targeted and hydrolyzed by C.botulinum neurotoxin type F (BoNT/F, botF) which probably hydrolyzes the 60-Gln-|-Lys-61 bond and inhibits neurotransmitter release. (Microbial infection) Targeted and hydrolyzed by C.botulinum neurotoxin type X (BoNT/X) which probably hydrolyzes the 68-Arg-|-Ala-69 bond and inhibits neurotransmitter release. It remains unknown whether BoNT/X is ever produced, or what organisms it targets. In terms of tissue distribution, nervous system, skeletal muscle and adipose tissue.

The protein localises to the cytoplasmic vesicle. Its subcellular location is the secretory vesicle. It is found in the synaptic vesicle membrane. The protein resides in the synapse. It localises to the synaptosome. The protein localises to the cytoplasmic vesicle membrane. Its subcellular location is the mitochondrion outer membrane. In terms of biological role, involved in the targeting and/or fusion of transport vesicles to their target membrane. This is Vesicle-associated membrane protein 1 (VAMP1) from Homo sapiens (Human).